The chain runs to 163 residues: 2-C-methyl-D-erythritol 2,4-cyclodiphosphate synthase (163 aa).

Asp8 and His10 together coordinate a divalent metal cation. 4-CDP-2-C-methyl-D-erythritol 2-phosphate is bound by residues 8–10 (DVH) and 34–35 (HS). His42 contacts a divalent metal cation. 4-CDP-2-C-methyl-D-erythritol 2-phosphate-binding positions include 56 to 58 (DIG), 132 to 135 (TTTE), Phe139, and Arg142.

It belongs to the IspF family. Homotrimer. Requires a divalent metal cation as cofactor.

The enzyme catalyses 4-CDP-2-C-methyl-D-erythritol 2-phosphate = 2-C-methyl-D-erythritol 2,4-cyclic diphosphate + CMP. The protein operates within isoprenoid biosynthesis; isopentenyl diphosphate biosynthesis via DXP pathway; isopentenyl diphosphate from 1-deoxy-D-xylulose 5-phosphate: step 4/6. Its function is as follows. Involved in the biosynthesis of isopentenyl diphosphate (IPP) and dimethylallyl diphosphate (DMAPP), two major building blocks of isoprenoid compounds. Catalyzes the conversion of 4-diphosphocytidyl-2-C-methyl-D-erythritol 2-phosphate (CDP-ME2P) to 2-C-methyl-D-erythritol 2,4-cyclodiphosphate (ME-CPP) with a corresponding release of cytidine 5-monophosphate (CMP). This is 2-C-methyl-D-erythritol 2,4-cyclodiphosphate synthase from Moorella thermoacetica (strain ATCC 39073 / JCM 9320).